The sequence spans 1150 residues: Rho-type GTPase-activating protein 1 (1150 aa).

Residues Met1–Gly10 are compositionally biased toward basic and acidic residues. Positions Met1 to Gln78 are disordered. Residues Thr40–Leu62 show a composition bias toward polar residues. LIM zinc-binding domains lie at Lys114–Asp177, Leu178–Ala238, and Asp483–Val546. The segment at Ser586–Ser683 is disordered. A compositionally biased stretch (polar residues) spans Glu598–Asp617. Residues Ser642–Ser655 are compositionally biased toward low complexity. Residue Ser690 is modified to Phosphoserine. The segment at Ala726 to Lys759 is disordered. A Rho-GAP domain is found at Val837–Cys1038. Disordered regions lie at residues Leu1078–Ile1097 and Leu1104–Ser1150. Basic residues predominate over residues Ala1088–Ile1097. Over residues Leu1104–Ala1134 the composition is skewed to polar residues.

Its subcellular location is the cell tip. The protein resides in the nucleus. Functionally, GTPase-activating protein for Rho1. Involved in the F-actin patch localization, cell morphogenesis, regulation of septation, and cell wall synthesis. The polypeptide is Rho-type GTPase-activating protein 1 (rga1) (Schizosaccharomyces pombe (strain 972 / ATCC 24843) (Fission yeast)).